A 356-amino-acid chain; its full sequence is MQFVQTSTLPQKTDQKFAVQKPIAIWLFVCCALVFAMVVVGGVTRLTDSGLSIVEWQPLVGTVPPLSQNDWDELFEKYHQTPQYKKVNLGMSLEEFKTIFWWEYFHRLLGRVIGLAFFIPFLYFLMKKAVDRPLGLKLSGIFLLGALQGGMGWYMVKSGLVDNPHVSQYRLTAHLGLAFAIYAAMFWVALDLLNPGRGLSANSGLRGLLNFSTMLSALVFIMVLSGGFVAGIRAGLAYNTFPLMDGHFIPPELFMLEPWYRNFFDNMTTVQFDHRLIAWTLAILVPIFWLKSRAVPLSGSARLACTLLLIMLAVQITLGISTLLLVVPLTLAAAHQAGALLLFTAALWVNHELRRQ.

The next 5 membrane-spanning stretches (helical) occupy residues 23-43 (IAIW…VGGV), 105-125 (FHRL…LYFL), 141-161 (IFLL…SGLV), 173-193 (AHLG…LDLL), and 212-232 (STML…VAGI). Residue histidine 274 participates in heme binding. 3 helical membrane passes run 276-296 (LIAW…RAVP), 307-327 (LLLI…LLVV), and 329-349 (LTLA…ALWV). Histidine 335 serves as a coordination point for heme.

It belongs to the COX15/CtaA family. Type 2 subfamily. As to quaternary structure, interacts with CtaB. Heme b serves as cofactor.

Its subcellular location is the cell membrane. The enzyme catalyses Fe(II)-heme o + 2 A + H2O = Fe(II)-heme a + 2 AH2. It participates in porphyrin-containing compound metabolism; heme A biosynthesis; heme A from heme O: step 1/1. In terms of biological role, catalyzes the conversion of heme O to heme A by two successive hydroxylations of the methyl group at C8. The first hydroxylation forms heme I, the second hydroxylation results in an unstable dihydroxymethyl group, which spontaneously dehydrates, resulting in the formyl group of heme A. This chain is Heme A synthase, found in Nitrosospira multiformis (strain ATCC 25196 / NCIMB 11849 / C 71).